Reading from the N-terminus, the 194-residue chain is Probable nicotinate-nucleotide adenylyltransferase (194 aa).

It belongs to the NadD family.

The enzyme catalyses nicotinate beta-D-ribonucleotide + ATP + H(+) = deamido-NAD(+) + diphosphate. The protein operates within cofactor biosynthesis; NAD(+) biosynthesis; deamido-NAD(+) from nicotinate D-ribonucleotide: step 1/1. Its function is as follows. Catalyzes the reversible adenylation of nicotinate mononucleotide (NaMN) to nicotinic acid adenine dinucleotide (NaAD). This chain is Probable nicotinate-nucleotide adenylyltransferase, found in Brucella abortus (strain 2308).